The following is a 1262-amino-acid chain: Synaptopodin-2 (1262 aa).

An interaction with VPS18 region spans residues 1–174; that stretch reads MGTGDFICIS…PGSQEGHLVE (174 aa). Residues 6–88 form the PDZ domain; the sequence is FICISMTGGA…SLHLLIKRPT (83 aa). Composition is skewed to polar residues over residues 89 to 105 and 246 to 260; these read SGTSEALDSETENTNHQ and TSLTSGTTVQTSSGR. Disordered regions lie at residues 89–114 and 239–276; these read SGTSEALDSETENTNHQHLPHGGPME and PAPEKADTSLTSGTTVQTSSGRELTVIQGRDPGGTGLP. Ser304, Ser323, and Ser324 each carry phosphoserine. Residues 323–363 form a disordered region; that stretch reads SSEGTEQGEDQRSGKDQGRPHKHRARHARLRRSESLSEKQV. Position 327 is a phosphothreonine (Thr327). Residues 331–341 are compositionally biased toward basic and acidic residues; sequence EDQRSGKDQGR. Residues 342–352 are compositionally biased toward basic residues; sequence PHKHRARHARL. Residues 353–363 are compositionally biased toward basic and acidic residues; sequence RRSESLSEKQV. The short motif at 392 to 400 is the Nuclear localization signal element; the sequence is KKRRRRARK. Interaction with ACTN2 stretches follow at residues 477–658, 659–922, and 899–1153; these read MEML…FYDS, SEQI…PPVA, and QSPT…NIEE. Disordered regions lie at residues 503–576 and 592–703; these read AQNE…GPQR and NQTA…SPNP. A phosphoserine mark is found at Ser518, Ser543, Ser544, Ser546, and Ser549. 2 F-actin binding regions span residues 530–658 and 659–801; these read TSYQ…FYDS and SEQI…VTAV. Over residues 540 to 552 the composition is skewed to low complexity; that stretch reads RMQSSVSESSFQM. Positions 554-560 are interaction with YWHAB; that stretch reads RSLGSVP. Phosphoserine; by PKA is present on Ser558. 2 stretches are compositionally biased toward polar residues: residues 558-569 and 592-606; these read SVPQQNGFSGVS and NQTAAPFSPTQSVTS. Ser599 carries the phosphoserine modification. The segment at 602 to 809 is interaction with YWHAB; it reads QSVTSPIPDF…AVSSIKIAQP (208 aa). Position 605 is a phosphothreonine; by PKA and CaMK2 (Thr605). Ser606 carries the post-translational modification Phosphoserine. Pro residues-rich tracts occupy residues 609–625 and 639–650; these read PDFPAPPPYSAVSPPPE and AQPPPWPQPAPW. The tract at residues 610 to 621 is interaction with BAG3; the sequence is DFPAPPPYSAVS. The PPPY motif motif lies at 614–617; sequence PPPY. A Phosphotyrosine modification is found at Tyr617. Ser621 is modified (phosphoserine). An F-actin bundling activity region spans residues 659–914; that stretch reads SEQIASRDER…LPASWKYSSN (256 aa). Phosphoserine is present on residues Ser700 and Ser724. Disordered stretches follow at residues 741 to 799 and 833 to 868; these read MQSS…PQVT and VVSHNYTPKPSAPTPLVNAAPAGAGGPSNELPGMSG. Residues 745–898 form an actin binding region; it reads AKQKTPPPVA…DTVQAHTVRA (154 aa). At Thr749 the chain carries Phosphothreonine. Positions 756-782 are enriched in low complexity; sequence KPAVKTSSSSQPVAPVSPVWSPGVAPA. Phosphoserine occurs at positions 772 and 776. The segment covering 786-799 has biased composition (polar residues); sequence AFSTTNPPNPPQVT. The interval 808 to 1153 is interaction with FLNC; that stretch reads QPTCPPARPA…EAFRPRNIEE (346 aa). 3 positions are modified to phosphoserine: Ser900, Ser904, and Ser908. The disordered stretch occupies residues 933-957; sequence LAAIKSQPPGAQASKTSKKKGKKPL. The interval 999–1018 is interaction with ZYX; it reads PAMKQALPPRQADIGSPTNA. Residues Ser1014, Ser1055, and Ser1090 each carry the phosphoserine modification.

Belongs to the synaptopodin family. In terms of assembly, may self-associate in muscle cells under oxidative stress. Binds F-actin. Interacts with ACTN2; ACTN2 is proposed to anchor SYOP2 at Z lines in mature myocytes. Interacts with AKAP6, PPP3CA and CAMK2A. Interacts (phosphorylated form) with YWHAB; YWHAB competes with ACTN2 for interaction with SYNPO2. Interacts with KPNA2; mediating nuclear import of SYNOP2; dependent on interaction with YWHAB. Interacts with IPO13; may be implicated in SYNOP2 nuclear import. Interacts with ZYX, FLNC, ILK. Interacts with BAG3 (via WW 1 domain). May associate with the CASA complex consisting of HSPA8, HSPB8 and BAG3. Interacts with VPS18. In terms of processing, phosphorylated by PKA, and by CaMK2 at multiple sites. Dephosphorylated by calcineurin at Ser-558 and Thr-605; abrogating interaction with YWHAB and impairing nuclear import.

The protein resides in the nucleus. Its subcellular location is the cytoplasm. It localises to the cytoskeleton. The protein localises to the myofibril. It is found in the sarcomere. The protein resides in the z line. Its subcellular location is the cell junction. It localises to the focal adhesion. Functionally, has an actin-binding and actin-bundling activity. Can induce the formation of F-actin networks. At the sarcomeric Z lines is proposed to act as adapter protein that links nascent myofibers to the sarcolemma via ZYX and may play a role in early assembly and stabilization of the Z lines. Involved in autophagosome formation. May play a role in chaperone-assisted selective autophagy (CASA) involved in Z lines maintenance in striated muscle under mechanical tension; may link the client-processing CASA chaperone machinery to a membrane-tethering and fusion complex providing autophagosome membranes. Involved in regulation of cell migration. May be a tumor suppressor. The sequence is that of Synaptopodin-2 (Synpo2) from Rattus norvegicus (Rat).